The following is a 135-amino-acid chain: MPVDFTGYWKMLVNENFEEYLRALDVNVALRKIANLLKPDKEIVQDGDHMIIRTLSTFRNYIMDFQVGKEFEEDLTGIDDRKCMTTVSWDGDKLQCVQKGEKEGRGWTQWIEGDELHLEMRVEGVVCKQVFKKVQ.

Trp9 is modified (omega-N-methylarginine). Residues 22 to 32 form an important for interaction with STRA6 region; that stretch reads RALDVNVALRK. All-trans-retinol contacts are provided by Lys41, Met63, and Gln109.

This sequence belongs to the calycin superfamily. Fatty-acid binding protein (FABP) family. In terms of assembly, interacts (only as retinol-free apoprotein) with STRA6. Detected in nearly all the tissues with higher expression in adult ovary, pancreas, pituitary gland and adrenal gland, and fetal liver.

Its subcellular location is the cytoplasm. It is found in the lipid droplet. Its function is as follows. Cytoplasmic retinol-binding protein. Accepts retinol from the transport protein STRA6, and thereby contributes to retinol uptake, storage and retinoid homeostasis. This chain is Retinol-binding protein 1 (RBP1), found in Homo sapiens (Human).